The following is a 367-amino-acid chain: NADH-quinone oxidoreductase subunit D (367 aa).

The protein belongs to the complex I 49 kDa subunit family. As to quaternary structure, NDH-1 is composed of 14 different subunits. Subunits NuoB, C, D, E, F, and G constitute the peripheral sector of the complex.

Its subcellular location is the cell membrane. It catalyses the reaction a quinone + NADH + 5 H(+)(in) = a quinol + NAD(+) + 4 H(+)(out). NDH-1 shuttles electrons from NADH, via FMN and iron-sulfur (Fe-S) centers, to quinones in the respiratory chain. The immediate electron acceptor for the enzyme in this species is believed to be a menaquinone. Couples the redox reaction to proton translocation (for every two electrons transferred, four hydrogen ions are translocated across the cytoplasmic membrane), and thus conserves the redox energy in a proton gradient. The sequence is that of NADH-quinone oxidoreductase subunit D from Geobacillus kaustophilus (strain HTA426).